The sequence spans 215 residues: Pyridoxine/pyridoxamine 5'-phosphate oxidase (215 aa).

Residues 9-12 and K69 each bind substrate; that span reads RRDY. FMN is bound by residues 64-69, 79-80, K86, and Q108; these read RVLLLK and FS. Substrate contacts are provided by Y126, R130, and S134. Residues 143 to 144 and W188 each bind FMN; that span reads QS. 194–196 contributes to the substrate binding site; sequence RLH. Residue R198 participates in FMN binding.

The protein belongs to the pyridoxamine 5'-phosphate oxidase family. Homodimer. Requires FMN as cofactor.

The catalysed reaction is pyridoxamine 5'-phosphate + O2 + H2O = pyridoxal 5'-phosphate + H2O2 + NH4(+). The enzyme catalyses pyridoxine 5'-phosphate + O2 = pyridoxal 5'-phosphate + H2O2. It functions in the pathway cofactor metabolism; pyridoxal 5'-phosphate salvage; pyridoxal 5'-phosphate from pyridoxamine 5'-phosphate: step 1/1. Its pathway is cofactor metabolism; pyridoxal 5'-phosphate salvage; pyridoxal 5'-phosphate from pyridoxine 5'-phosphate: step 1/1. Its function is as follows. Catalyzes the oxidation of either pyridoxine 5'-phosphate (PNP) or pyridoxamine 5'-phosphate (PMP) into pyridoxal 5'-phosphate (PLP). This chain is Pyridoxine/pyridoxamine 5'-phosphate oxidase, found in Azotobacter vinelandii (strain DJ / ATCC BAA-1303).